Reading from the N-terminus, the 294-residue chain is Probable aspartoacylase (294 aa).

Zn(2+)-binding residues include histidine 14 and glutamate 17. Residues arginine 56 and 63–64 each bind substrate; that span reads NR. Position 106 (histidine 106) interacts with Zn(2+). Glutamate 164 and tyrosine 275 together coordinate substrate.

It belongs to the AspA/AstE family. Aspartoacylase subfamily. Zn(2+) is required as a cofactor.

It catalyses the reaction an N-acyl-L-aspartate + H2O = a carboxylate + L-aspartate. The chain is Probable aspartoacylase from Nostoc sp. (strain PCC 7120 / SAG 25.82 / UTEX 2576).